A 376-amino-acid polypeptide reads, in one-letter code: UDP-N-acetylglucosamine 2-epimerase (376 aa).

Substrate contacts are provided by residues R10, K15, D95, E117, H213, Q271, F276, 290–292 (SGG), E296, and R313.

This sequence belongs to the UDP-N-acetylglucosamine 2-epimerase family. In terms of assembly, homodimer.

Its subcellular location is the cytoplasm. It catalyses the reaction UDP-N-acetyl-alpha-D-glucosamine = UDP-N-acetyl-alpha-D-mannosamine. Its pathway is bacterial outer membrane biogenesis; enterobacterial common antigen biosynthesis. Allosterically activated by its substrate, UDP-GlcNAc. In terms of biological role, catalyzes the reversible epimerization at C-2 of UDP-N-acetylglucosamine (UDP-GlcNAc) and thereby provides bacteria with UDP-N-acetylmannosamine (UDP-ManNAc), the activated donor of ManNAc residues. Also involved in bacteriophage N4 adsorption. In Escherichia coli (strain K12), this protein is UDP-N-acetylglucosamine 2-epimerase.